A 69-amino-acid chain; its full sequence is Large ribosomal subunit protein bL31 (69 aa).

Zn(2+)-binding residues include Cys-17, Cys-19, Cys-37, and Cys-40.

The protein belongs to the bacterial ribosomal protein bL31 family. Type A subfamily. In terms of assembly, part of the 50S ribosomal subunit. The cofactor is Zn(2+).

Binds the 23S rRNA. This chain is Large ribosomal subunit protein bL31, found in Caldicellulosiruptor bescii (strain ATCC BAA-1888 / DSM 6725 / KCTC 15123 / Z-1320) (Anaerocellum thermophilum).